Consider the following 838-residue polypeptide: Tuftelin-interacting protein 11 (838 aa).

Over residues 1–13 (MSLSHLYRDGEGH) the composition is skewed to basic and acidic residues. The tract at residues 1–51 (MSLSHLYRDGEGHLDDDDDDERENFEITDWDLQNEFNPNRQRHWQTKEEAT) is required for interaction with DHX15. Disordered regions lie at residues 1–74 (MSLS…RARD) and 86–137 (LKKG…SGGT). Position 2 is a phosphoserine (S2). A compositionally biased stretch (acidic residues) spans 14 to 29 (LDDDDDDERENFEITD). Positions 45-65 (QTKEEATYGVWAERDSDEERP) are enriched in basic and acidic residues. 3 positions are modified to phosphoserine: S60, S96, and S99. Over residues 92 to 101 (EEADSEDSDA) the composition is skewed to acidic residues. Over residues 102–117 (EEKPVKQEDFPKDLGP) the composition is skewed to basic and acidic residues. S145 bears the Phosphoserine mark. A G-patch domain is found at 150–196 (TKGIGQKLLQKMGYVPGRGLGKNAQGIINPIEAKQRKGKGAVGAYGS). Residues 193–237 (AYGSERTTQSLQDFPVADSEEEAEEEFQKELSQWRKDPSGSKKKP) form a disordered region. S211 carries the post-translational modification Phosphoserine. Positions 218–232 (EFQKELSQWRKDPSG) are enriched in basic and acidic residues. A Nuclear localization signal motif is present at residues 701–706 (VKDKFN). The segment at 711 to 735 (IMNRAVSSNVGAYMQPGARENIAYL) is required for nuclear speckle localization.

It belongs to the TFP11/STIP family. Identified in the spliceosome C complex. Found in the Intron Large (IL) complex, a post-mRNA release spliceosomal complex containing the excised intron, U2, U5 and U6 snRNPs, and splicing factors. Interacts with TUFT1. Interacts with DHX15; indicative for a recruitment of DHX15 to the IL complex. Interacts with GCFC2. As to expression, widely expressed. In tooth it is expressed in ameloblasts and odontoblasts.

The protein resides in the cytoplasm. Its subcellular location is the nucleus. Involved in pre-mRNA splicing, specifically in spliceosome disassembly during late-stage splicing events. Intron turnover seems to proceed through reactions in two lariat-intron associated complexes termed Intron Large (IL) and Intron Small (IS). In cooperation with DHX15 seems to mediate the transition of the U2, U5 and U6 snRNP-containing IL complex to the snRNP-free IS complex leading to efficient debranching and turnover of excised introns. May play a role in the differentiation of ameloblasts and odontoblasts or in the forming of the enamel extracellular matrix. The chain is Tuftelin-interacting protein 11 (Tfip11) from Mus musculus (Mouse).